Reading from the N-terminus, the 705-residue chain is Gamma-adducin (705 aa).

The segment covering Met-1–Ile-10 has biased composition (polar residues). The disordered stretch occupies residues Met-1–Glu-22. Position 2 is an N-acetylserine (Ser-2). A phosphoserine mark is found at Ser-31, Ser-42, Ser-64, Ser-402, Ser-414, Ser-423, Ser-442, and Ser-461. 4 disordered regions span residues Glu-472–Asn-495, Pro-535–His-556, Lys-572–His-612, and Glu-658–Ala-705. Lys-484 participates in a covalent cross-link: Glycyl lysine isopeptide (Lys-Gly) (interchain with G-Cter in SUMO2). A phosphoserine mark is found at Ser-583, Ser-585, Ser-590, Ser-672, Ser-676, Ser-678, and Ser-680. Residues Ser-590–Pro-605 show a composition bias toward low complexity. Over residues Pro-681–Ala-705 the composition is skewed to basic residues. Ser-682 is modified (phosphoserine; by PKC). The interval Lys-683–Lys-700 is interaction with calmodulin.

This sequence belongs to the aldolase class II family. Adducin subfamily. In terms of assembly, heterodimer of an alpha and a gamma subunit. Post-translationally, sumoylated. In terms of processing, proteolytically cleaved by asparagine endopeptidase (AEP) into 2 fragments. Overexpression of the 1-357 fragment induces neuronal apoptosis, and overexpression of either 1-357 or 358-706 fragment increases the degeneration of dendritic spines. Overexpression of the 1-357 fragment impairs neurite outgrowth by downregulating the expression of Rac2, and induces synaptic dysfunction and cognitive impairments in tau P301S transgenic mice, a mouse model for Alzheimer disease (AD). As to expression, expressed in kidney, brain, spleen, liver and heart. In terms of tissue distribution, expressed in renal interlobular arteries, afferent/efferent arterioles, parietal glomerular epithelial cells and microvilli of the luminal surface of the proximal tubule (at protein level). Expressed in podocytes (at protein level) Expressed in renal cortex (at protein level). Expressed in primary vascular smooth muscle cells (VSMCs) of the kidney (at protein level). Expressed in tubular cells and glomeruli (at protein level).

The protein localises to the cytoplasm. It localises to the cytoskeleton. The protein resides in the cell membrane. In terms of biological role, membrane-cytoskeleton-associated protein that promotes the assembly of the spectrin-actin network. Plays a role in actin filament capping. Binds to calmodulin. Involved in myogenic reactivity of the renal afferent arteriole (Af-art), renal interlobular arteries and middle cerebral artery (MCA) to increased perfusion pressure. Involved in regulation of potassium channels in the vascular smooth muscle cells (VSMCs) of the Af-art and MCA ex vivo. Involved in regulation of glomerular capillary pressure, glomerular filtration rate (GFR) and glomerular nephrin expression in response to hypertension. Involved in renal blood flow (RBF) autoregulation. Plays a role in podocyte structure and function. Regulates globular monomer actin (G-actin) and filamentous polymer actin (F-actin) ratios in the primary podocytes affecting actin cytoskeleton organization. Regulates expression of synaptopodin, RhoA, Rac1 and CDC42 in the renal cortex and the primary podocytes. Regulates expression of nephrin in the glomeruli and in the primary podocytes, expression of nephrin and podocinin in the renal cortex, and expression of focal adhesion proteins integrin alpha-3 and integrin beta-1 in the glomeruli. Involved in cell migration and cell adhesion of podocytes, and in podocyte foot process effacement. Regulates expression of profibrotics markers MMP2, MMP9, TGF beta-1, tubular tight junction protein E-cadherin, and mesenchymal markers vimentin and alpha-SMA. Promotes the growth of neurites. In Rattus norvegicus (Rat), this protein is Gamma-adducin (Add3).